Consider the following 121-residue polypeptide: Basic phospholipase A2 homolog zhaoermiatoxin (121 aa).

Intrachain disulfides connect cysteine 26–cysteine 115, cysteine 28–cysteine 44, cysteine 43–cysteine 95, cysteine 49–cysteine 121, cysteine 50–cysteine 88, cysteine 57–cysteine 81, and cysteine 75–cysteine 86.

Belongs to the phospholipase A2 family. Group II subfamily. R49 sub-subfamily. In terms of assembly, homodimer. In terms of tissue distribution, expressed by the venom gland.

The protein localises to the secreted. Functionally, snake venom phospholipase A2 homolog that induces myonecrosis, and edema. Has low myotoxic activity. The chain is Basic phospholipase A2 homolog zhaoermiatoxin from Protobothrops mangshanensis (Mangshan pitviper).